A 460-amino-acid chain; its full sequence is ESX-1 secretion-associated protein EspB (460 aa).

Disordered regions lie at residues 92–116 (LDND…SAEL), 303–335 (PSDG…PADT), and 405–441 (LGGG…TEDR).

Post-translationally, cleaved in the C-terminal region by MycP1.

It localises to the secreted. This chain is ESX-1 secretion-associated protein EspB, found in Mycobacterium tuberculosis (strain CDC 1551 / Oshkosh).